The primary structure comprises 418 residues: Voltage-gated ClC-type chloride channel ClcB (418 aa).

The next 10 helical transmembrane spans lie at 5-25 (LLIA…FRHA), 54-74 (LLTP…WQKF), 146-166 (LWIA…PLAG), 168-188 (LFIA…PVII), 222-242 (ALII…LTLM), 258-278 (WQLA…PAVW), 291-311 (APPL…AVLA), 316-336 (GAPG…GMLY), 352-372 (LLLG…APIM), and 380-400 (MTGE…ASVI).

The protein belongs to the chloride channel (TC 2.A.49) family. ClcB subfamily.

The protein localises to the cell inner membrane. Its function is as follows. Probably acts as an electrical shunt for an outwardly-directed proton pump that is linked to amino acid decarboxylation, as part of the extreme acid resistance (XAR) response. This is Voltage-gated ClC-type chloride channel ClcB from Escherichia coli (strain ATCC 8739 / DSM 1576 / NBRC 3972 / NCIMB 8545 / WDCM 00012 / Crooks).